Reading from the N-terminus, the 363-residue chain is MNYQILARKWRPQSFKKIIGQKYIVKAISNGFSLGKIHHAWLLSGTRGVGKTTIARLIAKSLNCEIGITSLPCRKCTICQEIEKGICLDFIEIDAASRTKVEEIREILDNIYYTPSKSRFKVYLIDEVHMLSRHSFNALLKTLEEPPQHIKFILATTDVEKIPKTIRSRCLHFKLNILSEEDIFNFLKHILKKGGNNFDEEALKIISDYANGSMRDALNLLEHAMHLSKNNINLKNTTEMLGIPNKKHAFLLTKFLLEQDSKKMMCLLNKISKIGLEWQNILIEMMRFLHHIAMLKSYPKIWNQIFIKNNENEIKKIAENNSKYNIQLCYKILLKGRKELFFSPNHKMGVEMILLQAITEIKR.

Residue 45-52 (GTRGVGKT) participates in ATP binding. The Zn(2+) site is built by Cys64, Cys73, Cys76, and Cys79.

The protein belongs to the DnaX/STICHEL family. DNA polymerase III contains a core (composed of alpha, epsilon and theta chains) that associates with a tau subunit. This core dimerizes to form the POLIII' complex. PolIII' associates with the gamma complex (composed of gamma, delta, delta', psi and chi chains) and with the beta chain to form the complete DNA polymerase III complex.

It carries out the reaction DNA(n) + a 2'-deoxyribonucleoside 5'-triphosphate = DNA(n+1) + diphosphate. Its function is as follows. DNA polymerase III is a complex, multichain enzyme responsible for most of the replicative synthesis in bacteria. This DNA polymerase also exhibits 3' to 5' exonuclease activity. The protein is DNA polymerase III subunit gamma (dnaX) of Buchnera aphidicola subsp. Schizaphis graminum (strain Sg).